A 158-amino-acid polypeptide reads, in one-letter code: Small ribosomal subunit protein uS9 (158 aa).

Belongs to the universal ribosomal protein uS9 family.

The sequence is that of Small ribosomal subunit protein uS9 from Rhodopseudomonas palustris (strain BisA53).